We begin with the raw amino-acid sequence, 131 residues long: D-ribose pyranase (131 aa).

His20 functions as the Proton donor in the catalytic mechanism. Substrate is bound by residues Asp28, His98, and 120-122; that span reads FSN.

The protein belongs to the RbsD / FucU family. RbsD subfamily. As to quaternary structure, homodecamer.

The protein localises to the cytoplasm. The enzyme catalyses beta-D-ribopyranose = beta-D-ribofuranose. It participates in carbohydrate metabolism; D-ribose degradation; D-ribose 5-phosphate from beta-D-ribopyranose: step 1/2. Catalyzes the interconversion of beta-pyran and beta-furan forms of D-ribose. The protein is D-ribose pyranase of Petrotoga mobilis (strain DSM 10674 / SJ95).